Here is a 541-residue protein sequence, read N- to C-terminus: 2-succinyl-5-enolpyruvyl-6-hydroxy-3-cyclohexene-1-carboxylate synthase (541 aa).

The protein belongs to the TPP enzyme family. MenD subfamily. In terms of assembly, homodimer. It depends on Mg(2+) as a cofactor. Requires Mn(2+) as cofactor. The cofactor is thiamine diphosphate.

It carries out the reaction isochorismate + 2-oxoglutarate + H(+) = 5-enolpyruvoyl-6-hydroxy-2-succinyl-cyclohex-3-ene-1-carboxylate + CO2. The protein operates within quinol/quinone metabolism; 1,4-dihydroxy-2-naphthoate biosynthesis; 1,4-dihydroxy-2-naphthoate from chorismate: step 2/7. Its pathway is quinol/quinone metabolism; menaquinone biosynthesis. Catalyzes the thiamine diphosphate-dependent decarboxylation of 2-oxoglutarate and the subsequent addition of the resulting succinic semialdehyde-thiamine pyrophosphate anion to isochorismate to yield 2-succinyl-5-enolpyruvyl-6-hydroxy-3-cyclohexene-1-carboxylate (SEPHCHC). This Rhodococcus jostii (strain RHA1) protein is 2-succinyl-5-enolpyruvyl-6-hydroxy-3-cyclohexene-1-carboxylate synthase.